Reading from the N-terminus, the 601-residue chain is Elongation factor 4 (601 aa).

The tr-type G domain occupies 2-184 (DLIRNFSIIA…EMIARVPPPT (183 aa)). GTP contacts are provided by residues 14 to 19 (DHGKST) and 131 to 134 (NKID).

This sequence belongs to the TRAFAC class translation factor GTPase superfamily. Classic translation factor GTPase family. LepA subfamily.

The protein resides in the cell inner membrane. It carries out the reaction GTP + H2O = GDP + phosphate + H(+). In terms of biological role, required for accurate and efficient protein synthesis under certain stress conditions. May act as a fidelity factor of the translation reaction, by catalyzing a one-codon backward translocation of tRNAs on improperly translocated ribosomes. Back-translocation proceeds from a post-translocation (POST) complex to a pre-translocation (PRE) complex, thus giving elongation factor G a second chance to translocate the tRNAs correctly. Binds to ribosomes in a GTP-dependent manner. In Polynucleobacter asymbioticus (strain DSM 18221 / CIP 109841 / QLW-P1DMWA-1) (Polynucleobacter necessarius subsp. asymbioticus), this protein is Elongation factor 4.